Reading from the N-terminus, the 336-residue chain is Transcription factor MYB29 (336 aa).

HTH myb-type domains follow at residues 9–65 and 66–116; these read GEGL…KPDI and KRGE…KKLL. 2 DNA-binding regions (H-T-H motif) span residues 37–61 and 89–112; these read WRDI…ANYL and WSVI…NTHL. The interval 127 to 170 is disordered; it reads KPLAYDSNPDEQSQSGSISPKSLPPSSSKNVPEITSSDETPKYD. The segment covering 141–154 has biased composition (low complexity); it reads SGSISPKSLPPSSS. The segment covering 155–164 has biased composition (polar residues); sequence KNVPEITSSD.

Can form complexes with MYC2, MYC3 or MYC4. Expressed in both vegetative and generative organs. Mostly present in seedlings, inflorescences, roots and stems, and, to a lower extent, in leaves (in midvein and trichomes) and siliques.

It localises to the nucleus. Its function is as follows. Plays a minor rheostat role in aliphatic glucosinolates (GLSs) biosynthesis, mostly short chained. Together with MYB28/HAG1 and MYB76/HAG2, promotes aliphatic glucosinolate biosynthesis but represses indolic glucosinolate biosynthesis. Prevents insect performance (e.g. lepidopteran insect Mamestra brassicae) by promoting glucosinolates. This is Transcription factor MYB29 (MYB29) from Arabidopsis thaliana (Mouse-ear cress).